A 484-amino-acid chain; its full sequence is Adenylosuccinate synthetase, chloroplastic (484 aa).

The N-terminal 44 residues, 1–44 (MSLSTLSHPAAAAAGSGKSLFPAGPAAQSVHFPKARLPVPAAVS), are a transit peptide targeting the chloroplast. Residues 71–77 (GDEGKGK) and 99–101 (GHT) each bind GTP. D72 serves as the catalytic Proton acceptor. Mg(2+)-binding residues include D72 and G99. IMP contacts are provided by residues 72-75 (DEGK), 97-100 (NAGH), T189, R203, Q283, T298, and R362. H100 (proton donor) is an active-site residue. 358 to 364 (TTTGRPR) is a binding site for substrate. GTP-binding positions include R364, 390–392 (KLD), and 473–475 (GVG).

Belongs to the adenylosuccinate synthetase family. As to quaternary structure, homodimer. It depends on Mg(2+) as a cofactor.

It localises to the plastid. It is found in the chloroplast. The catalysed reaction is IMP + L-aspartate + GTP = N(6)-(1,2-dicarboxyethyl)-AMP + GDP + phosphate + 2 H(+). The protein operates within purine metabolism; AMP biosynthesis via de novo pathway; AMP from IMP: step 1/2. Its function is as follows. Plays an important role in the de novo pathway and in the salvage pathway of purine nucleotide biosynthesis. Catalyzes the first committed step in the biosynthesis of AMP from IMP. The sequence is that of Adenylosuccinate synthetase, chloroplastic from Zea mays (Maize).